Consider the following 443-residue polypeptide: Ribosomal protein uS12 methylthiotransferase RimO (443 aa).

Positions 8–118 (PKVGFVSLGC…VVNAVHEVVP (111 aa)) constitute an MTTase N-terminal domain. Residues Cys-17, Cys-53, Cys-82, Cys-151, Cys-155, and Cys-158 each coordinate [4Fe-4S] cluster. One can recognise a Radical SAM core domain in the interval 137 to 376 (LTPRHYAYLK…AHQQAISSAR (240 aa)). The TRAM domain maps to 378-443 (QLRIGKEIEV…DEYDMWAEPV (66 aa)).

The protein belongs to the methylthiotransferase family. RimO subfamily. [4Fe-4S] cluster is required as a cofactor.

Its subcellular location is the cytoplasm. The catalysed reaction is L-aspartate(89)-[ribosomal protein uS12]-hydrogen + (sulfur carrier)-SH + AH2 + 2 S-adenosyl-L-methionine = 3-methylsulfanyl-L-aspartate(89)-[ribosomal protein uS12]-hydrogen + (sulfur carrier)-H + 5'-deoxyadenosine + L-methionine + A + S-adenosyl-L-homocysteine + 2 H(+). In terms of biological role, catalyzes the methylthiolation of an aspartic acid residue of ribosomal protein uS12. This Pseudomonas putida (strain W619) protein is Ribosomal protein uS12 methylthiotransferase RimO.